The sequence spans 90 residues: Interferon alpha-inducible protein 27-like protein 2A (90 aa).

The first 24 residues, 1–24 (MLGTLFGSAIGGALAVAGAPVALA), serve as a signal peptide directing secretion. The next 2 membrane-spanning stretches (helical) occupy residues 28-48 (FTGT…AAAI) and 67-89 (GVLG…VGAL).

Belongs to the IFI6/IFI27 family. As to quaternary structure, homodimer. Interacts with SKP2. Interacts with NR4A1. May interact with BCL2.

It is found in the nucleus inner membrane. May be involved in the interferon-induced negative regulation of the transcriptional activity of NR4A1, NR4A2 and NR4A3 through the enhancement of XPO1-mediated nuclear export of these nuclear receptors. Through the regulation of NR4A1 transcriptional activity, may play a role in the vascular response to injury. In Mus musculus (Mouse), this protein is Interferon alpha-inducible protein 27-like protein 2A.